The following is a 520-amino-acid chain: Bifunctional dihydrofolate reductase-thymidylate synthase (520 aa).

A DHFR domain is found at 26 to 229 (AFSIVVALDK…LEFEICKYVP (204 aa)). Valine 30 is a substrate binding site. NADP(+) contacts are provided by residues alanine 32 and 38–44 (GIGDGES). A substrate-binding site is contributed by aspartate 52. NADP(+) is bound by residues 81-83 (RKT), 102-105 (LSSK), and 157-164 (GGAQVYAD). Substrate is bound by residues tyrosine 162 and threonine 180. The interval 234–520 (ERQYLELIDR…HPPIKMEMAV (287 aa)) is thymidylate synthase. Residue arginine 254 participates in dUMP binding. Cysteine 400 is a catalytic residue. DUMP contacts are provided by residues histidine 401, 421-425 (QRSCD), asparagine 433, and 463-465 (HVY).

The protein in the N-terminal section; belongs to the dihydrofolate reductase family. This sequence in the C-terminal section; belongs to the thymidylate synthase family.

It catalyses the reaction (6S)-5,6,7,8-tetrahydrofolate + NADP(+) = 7,8-dihydrofolate + NADPH + H(+). It carries out the reaction dUMP + (6R)-5,10-methylene-5,6,7,8-tetrahydrofolate = 7,8-dihydrofolate + dTMP. It functions in the pathway cofactor biosynthesis; tetrahydrofolate biosynthesis; 5,6,7,8-tetrahydrofolate from 7,8-dihydrofolate: step 1/1. Functionally, bifunctional enzyme. Involved in de novo dTMP biosynthesis. Key enzyme in folate metabolism. Catalyzes an essential reaction for de novo glycine and purine synthesis, DNA precursor synthesis, and for the conversion of dUMP to dTMP. In Leishmania amazonensis, this protein is Bifunctional dihydrofolate reductase-thymidylate synthase.